The chain runs to 68 residues: Beta-defensin 1 (68 aa).

The N-terminal stretch at 1–21 (MRTSYLLLFTLCLLLSEMASG) is a signal peptide. Residues 22-32 (GNFLTGLGHRS) constitute a propeptide that is removed on maturation. Disulfide bonds link Cys-37-Cys-66, Cys-44-Cys-59, and Cys-49-Cys-67.

It belongs to the beta-defensin family. In terms of assembly, monomer. Homodimer.

It is found in the secreted. The protein localises to the membrane. In terms of biological role, has bactericidal activity. May act as a ligand for C-C chemokine receptor CCR6. Positively regulates the sperm motility and bactericidal activity in a CCR6-dependent manner. Binds to CCR6 and triggers Ca2+ mobilization in the sperm which is important for its motility. This is Beta-defensin 1 (DEFB1) from Pongo pygmaeus (Bornean orangutan).